Consider the following 205-residue polypeptide: LIM domain-containing protein PLIM2b (205 aa).

2 consecutive LIM zinc-binding domains span residues 8–68 (DKCN…LFKE) and 102–162 (DKCA…LFME). The tract at residues 177–205 (RTASGNTLPPEPTEDVAVEAKEENGVSES) is disordered. The segment covering 194-205 (VEAKEENGVSES) has biased composition (basic and acidic residues).

In terms of assembly, interacts with F-actin. As to expression, predominantly expressed in flowers and in pollen grains. Detected in vasculature and roots.

Its subcellular location is the cytoplasm. The protein resides in the cytoskeleton. Its function is as follows. Binds to actin filaments and promotes cross-linking into thick bundles. Has an actin-stabilizing activity. The actin regulatory activities are inhibited by pH &gt; 6.8 but are [Ca(2+)] independent. This is LIM domain-containing protein PLIM2b from Arabidopsis thaliana (Mouse-ear cress).